Consider the following 210-residue polypeptide: FMN-dependent NADH:quinone oxidoreductase 9 (210 aa).

FMN-binding positions include Ser-10 and 16-18; that span reads SAS.

The protein belongs to the azoreductase type 1 family. In terms of assembly, homodimer. It depends on FMN as a cofactor.

It catalyses the reaction 2 a quinone + NADH + H(+) = 2 a 1,4-benzosemiquinone + NAD(+). The catalysed reaction is N,N-dimethyl-1,4-phenylenediamine + anthranilate + 2 NAD(+) = 2-(4-dimethylaminophenyl)diazenylbenzoate + 2 NADH + 2 H(+). Functionally, quinone reductase that provides resistance to thiol-specific stress caused by electrophilic quinones. Its function is as follows. Also exhibits azoreductase activity. Catalyzes the reductive cleavage of the azo bond in aromatic azo compounds to the corresponding amines. This is FMN-dependent NADH:quinone oxidoreductase 9 from Burkholderia lata (strain ATCC 17760 / DSM 23089 / LMG 22485 / NCIMB 9086 / R18194 / 383).